A 25-amino-acid polypeptide reads, in one-letter code: Large ribosomal subunit protein uL29 (25 aa).

It belongs to the universal ribosomal protein uL29 family.

This Brevundimonas vesicularis (Pseudomonas vesicularis) protein is Large ribosomal subunit protein uL29 (rpmC).